Here is a 270-residue protein sequence, read N- to C-terminus: uncharacterized protein (270 aa).

A signal peptide spans 1–22 (MEYIKKIALYMSVLLLIIFIGG). Cysteine 23 carries N-palmitoyl cysteine lipidation. Cysteine 23 carries the S-diacylglycerol cysteine lipid modification.

Belongs to the staphylococcal tandem lipoprotein family.

It localises to the cell membrane. This is an uncharacterized protein from Staphylococcus aureus (strain USA300).